Consider the following 298-residue polypeptide: MLTKSAENKRNRKDDSMRPGQQLTLSIDHQTDFGYFLTDGEDTILLHNSEMTEDIEDRDEVEVFIYVDQQERLAATMKIPIISADEYGWVEVVDKVEDMGVFVDVGLSKDALVATEHLPPYEDVWPQKGDKLYCMLKVTNRGRMFAKPAPEDIISELFTDASEDLMNKELTGTVYRLIASGSFVITDDGIRCFIHPSERKEEPRLGSRVTGRVIQVKEDGSVNLSLLPRKQDAMSVDAECILTYMRMRNGAMPYSDKSQPDDIRERFNMSKAAFKRALGHLMKNGKVYQENGWTYEKK.

Residues 1 to 17 show a composition bias toward basic and acidic residues; the sequence is MLTKSAENKRNRKDDSM. The tract at residues 1-22 is disordered; that stretch reads MLTKSAENKRNRKDDSMRPGQQ. In terms of domain architecture, S1 motif spans 167–227; it reads NKELTGTVYR…EDGSVNLSLL (61 aa).

This is an uncharacterized protein from Bacillus subtilis (strain 168).